We begin with the raw amino-acid sequence, 155 residues long: Putative pre-16S rRNA nuclease (155 aa).

This sequence belongs to the YqgF nuclease family.

It localises to the cytoplasm. Could be a nuclease involved in processing of the 5'-end of pre-16S rRNA. The polypeptide is Putative pre-16S rRNA nuclease (Corynebacterium jeikeium (strain K411)).